Here is a 417-residue protein sequence, read N- to C-terminus: Ribulose bisphosphate carboxylase large chain (417 aa).

Substrate-binding residues include N103 and T153. Residue K155 is the Proton acceptor of the active site. K157 contacts substrate. Mg(2+) contacts are provided by K181, D183, and E184. K181 is modified (N6-carboxylysine). Catalysis depends on H274, which acts as the Proton acceptor. Residues R275, H307, and S359 each coordinate substrate.

This sequence belongs to the RuBisCO large chain family. Type I subfamily. In terms of assembly, heterohexadecamer of 8 large chains and 8 small chains. Mg(2+) serves as cofactor.

The protein resides in the plastid. The protein localises to the chloroplast. It catalyses the reaction 2 (2R)-3-phosphoglycerate + 2 H(+) = D-ribulose 1,5-bisphosphate + CO2 + H2O. It carries out the reaction D-ribulose 1,5-bisphosphate + O2 = 2-phosphoglycolate + (2R)-3-phosphoglycerate + 2 H(+). Its function is as follows. RuBisCO catalyzes two reactions: the carboxylation of D-ribulose 1,5-bisphosphate, the primary event in carbon dioxide fixation, as well as the oxidative fragmentation of the pentose substrate in the photorespiration process. Both reactions occur simultaneously and in competition at the same active site. In Acrostichum aureum (Golden leather fern), this protein is Ribulose bisphosphate carboxylase large chain.